Reading from the N-terminus, the 473-residue chain is ATP synthase subunit beta (473 aa).

158-165 serves as a coordination point for ATP; that stretch reads GGAGVGKT.

The protein belongs to the ATPase alpha/beta chains family. As to quaternary structure, F-type ATPases have 2 components, CF(1) - the catalytic core - and CF(0) - the membrane proton channel. CF(1) has five subunits: alpha(3), beta(3), gamma(1), delta(1), epsilon(1). CF(0) has three main subunits: a(1), b(2) and c(9-12). The alpha and beta chains form an alternating ring which encloses part of the gamma chain. CF(1) is attached to CF(0) by a central stalk formed by the gamma and epsilon chains, while a peripheral stalk is formed by the delta and b chains.

It localises to the cell membrane. The catalysed reaction is ATP + H2O + 4 H(+)(in) = ADP + phosphate + 5 H(+)(out). Its function is as follows. Produces ATP from ADP in the presence of a proton gradient across the membrane. The catalytic sites are hosted primarily by the beta subunits. The polypeptide is ATP synthase subunit beta (Bacillus sp. (strain PS3)).